Reading from the N-terminus, the 131-residue chain is Peptide methionine sulfoxide reductase MsrB (131 aa).

Residues 8 to 130 (LDEWRSMLDP…NSVCIDLRPR (123 aa)) form the MsrB domain. Zn(2+) contacts are provided by cysteine 47, cysteine 50, cysteine 96, and cysteine 99. Cysteine 119 serves as the catalytic Nucleophile.

This sequence belongs to the MsrB Met sulfoxide reductase family. Zn(2+) serves as cofactor.

The enzyme catalyses L-methionyl-[protein] + [thioredoxin]-disulfide + H2O = L-methionyl-(R)-S-oxide-[protein] + [thioredoxin]-dithiol. The polypeptide is Peptide methionine sulfoxide reductase MsrB (Pseudomonas putida (strain ATCC 700007 / DSM 6899 / JCM 31910 / BCRC 17059 / LMG 24140 / F1)).